The primary structure comprises 706 residues: Protein psiG (706 aa).

An N-terminal signal peptide occupies residues 1–23 (MKIILTLLIILFSLNKNLNFVSS). The Extracellular portion of the chain corresponds to 24-644 (EVTKSRICSI…FVCKPAAIIS (621 aa)). Residues asparagine 95, asparagine 107, asparagine 212, asparagine 296, asparagine 429, asparagine 521, asparagine 532, and asparagine 616 are each glycosylated (N-linked (GlcNAc...) asparagine). Residues 109-253 (TLDKSSNIYS…SDYCGVCQGD (145 aa)) enclose the PA14 domain. A helical membrane pass occupies residues 645-665 (TSVIVGVSVAAAVVAIAIVVA). Residues 666–706 (SKKGYDAWAASNNNSLASLTSNPLYENPTGNGDNPMYQPNS) lie on the Cytoplasmic side of the membrane. The interval 687-706 (NPLYENPTGNGDNPMYQPNS) is disordered. The segment covering 693-706 (PTGNGDNPMYQPNS) has biased composition (polar residues).

Belongs to the prespore-cell-inducing factor family.

The protein localises to the membrane. In Dictyostelium discoideum (Social amoeba), this protein is Protein psiG (psiG-1).